Here is a 379-residue protein sequence, read N- to C-terminus: MAGSRSIFEEVQDSQKPAAMPGGVSRDRGRGRARVRVFIMILFVMVVVQIAIGGLTRLTDSGLSITEWAPITGAIPPLDEAAWEAELEAYRATTEYQEQNRGMSLAEFKVIYWWEWGHRQWARFLGVVWAVGFVGLLATKSVPVGWTGRLLLLGVLGGLQGVAGWWMVHSGLAPGMFDVASYRLAVHLGLAFLILGLMAWYILRLGRAEAELMTARRDGDRMLAGMATGLLHLTALQILIGALVAGIDAGRNYIDWPLMAGAFTPPDMWAIEPWYRNLFENDGTVQFFHRVTGYLLFVIGVAAWIMARRSARTATKRAFDWMAVMLFGQIVLGIMTVMHSSPWYLAIVHQFGAVVLITLILRARFLARYPLPQSVRGAA.

The interval 1-28 (MAGSRSIFEEVQDSQKPAAMPGGVSRDR) is disordered. The next 8 membrane-spanning stretches (helical) occupy residues 35-55 (VRVF…IGGL), 124-144 (FLGV…SVPV), 150-170 (LLLL…MVHS), 183-203 (RLAV…WYIL), 227-247 (ATGL…VAGI), 287-307 (FFHR…WIMA), 318-338 (AFDW…MTVM), and 341-361 (SPWY…TLIL). Heme is bound at residue H289. H349 contributes to the heme binding site.

This sequence belongs to the COX15/CtaA family. Type 2 subfamily. Interacts with CtaB. Heme b serves as cofactor.

It is found in the cell membrane. The enzyme catalyses Fe(II)-heme o + 2 A + H2O = Fe(II)-heme a + 2 AH2. Its pathway is porphyrin-containing compound metabolism; heme A biosynthesis; heme A from heme O: step 1/1. Catalyzes the conversion of heme O to heme A by two successive hydroxylations of the methyl group at C8. The first hydroxylation forms heme I, the second hydroxylation results in an unstable dihydroxymethyl group, which spontaneously dehydrates, resulting in the formyl group of heme A. The sequence is that of Heme A synthase from Jannaschia sp. (strain CCS1).